A 291-amino-acid chain; its full sequence is Ribosome maturation factor RimP (291 aa).

A disordered region spans residues 188–291 (ERGLGEDEEF…GGKPKAKETH (104 aa)). Over residues 193–211 (EDEEFEDDADEVFEGDEAD) the composition is skewed to acidic residues. 2 stretches are compositionally biased toward basic and acidic residues: residues 212 to 237 (EKAAKDAANAERANAKKAADKAEKRA) and 245 to 254 (AKSEKAEKSQ).

This sequence belongs to the RimP family.

It is found in the cytoplasm. In terms of biological role, required for maturation of 30S ribosomal subunits. This chain is Ribosome maturation factor RimP, found in Azorhizobium caulinodans (strain ATCC 43989 / DSM 5975 / JCM 20966 / LMG 6465 / NBRC 14845 / NCIMB 13405 / ORS 571).